The following is a 224-amino-acid chain: Deoxyribose-phosphate aldolase (224 aa).

The active-site Proton donor/acceptor is D92. Residue K155 is the Schiff-base intermediate with acetaldehyde of the active site. K184 acts as the Proton donor/acceptor in catalysis.

Belongs to the DeoC/FbaB aldolase family. DeoC type 1 subfamily.

It is found in the cytoplasm. The enzyme catalyses 2-deoxy-D-ribose 5-phosphate = D-glyceraldehyde 3-phosphate + acetaldehyde. Its pathway is carbohydrate degradation; 2-deoxy-D-ribose 1-phosphate degradation; D-glyceraldehyde 3-phosphate and acetaldehyde from 2-deoxy-alpha-D-ribose 1-phosphate: step 2/2. Its function is as follows. Catalyzes a reversible aldol reaction between acetaldehyde and D-glyceraldehyde 3-phosphate to generate 2-deoxy-D-ribose 5-phosphate. In Halalkalibacterium halodurans (strain ATCC BAA-125 / DSM 18197 / FERM 7344 / JCM 9153 / C-125) (Bacillus halodurans), this protein is Deoxyribose-phosphate aldolase.